The sequence spans 102 residues: Cytochrome c (102 aa).

Position 1 is an N-acetylglycine (Gly-1). The span at 1–11 shows a compositional bias: basic and acidic residues; the sequence is GDAERGKKLFE. The segment at 1-26 is disordered; that stretch reads GDAERGKKLFESRAGQCHSSQKGVNS. Cys-17, His-18, and Met-79 together coordinate heme c. The segment covering 17–26 has biased composition (polar residues); the sequence is CHSSQKGVNS. At Lys-85 the chain carries N6,N6,N6-trimethyllysine.

Belongs to the cytochrome c family. In terms of processing, binds 1 heme c group covalently per subunit.

The protein localises to the mitochondrion intermembrane space. Its function is as follows. Electron carrier protein. The oxidized form of the cytochrome c heme group can accept an electron from the heme group of the cytochrome c1 subunit of cytochrome reductase. Cytochrome c then transfers this electron to the cytochrome oxidase complex, the final protein carrier in the mitochondrial electron-transport chain. This Euglena viridis (Cercaria viridis) protein is Cytochrome c.